Consider the following 739-residue polypeptide: Vascular cell adhesion protein 1 (739 aa).

Residues 1–24 (MPGKMVVILGASNILWIMFAASQA) form the signal peptide. Ig-like C2-type domains are found at residues 25–105 (FKIE…RKLE), 109–212 (QVEI…TVRQ), 223–309 (PKNT…LIVQ), 312–399 (PFTV…IQVE), 408–506 (EIEM…QTLY), 511–595 (PRDT…VELI), and 600–684 (PKDI…LTLD). Residues 25–698 (FKIETTPESR…ENNKDYFSPE (674 aa)) are Extracellular-facing. 5 cysteine pairs are disulfide-bonded: cysteine 47–cysteine 95, cysteine 52–cysteine 99, cysteine 137–cysteine 195, cysteine 246–cysteine 291, and cysteine 335–cysteine 383. N-linked (GlcNAc...) asparagine glycans are attached at residues asparagine 273, asparagine 365, asparagine 417, asparagine 463, asparagine 531, and asparagine 561. A disulfide bond links cysteine 534 and cysteine 579. A helical membrane pass occupies residues 699–720 (LLVLYFASSLIIPAIGMIIYFA). Over 721–739 (RKANMKGSYSLVEAQKSKV) the chain is Cytoplasmic.

In terms of processing, cleaved by the metalloproteinase ADAM17 to generate the soluble form. Post-translationally, sialoglycoprotein. Ubiquitinated by TRIM65 via 'Lys-48'-linked ubiquitination; leading to proteasomal degradation. Expressed on inflamed vascular endothelium, as well as on macrophage-like and dendritic cell types in both normal and inflamed tissue.

The protein resides in the cell membrane. The protein localises to the secreted. Cell adhesion glycoprotein predominantly expressed on the surface of endothelial cells that plays an important role in immune surveillance and inflammation. Acts as a major regulator of leukocyte adhesion to the endothelium through interaction with different types of integrins. During inflammatory responses, binds ligands on the surface of activated endothelial cells to initiate the activation of calcium channels and the plasma membrane-associated small GTPase RAC1 leading to leukocyte transendothelial migration. Also serves as a quality-control checkpoint for entry into bone marrow by providing a 'don't-eat-me' stamping in the context of major histocompatibility complex (MHC) class-I presentation. In Homo sapiens (Human), this protein is Vascular cell adhesion protein 1 (VCAM1).